The sequence spans 476 residues: ATP synthase subunit beta, chloroplastic (476 aa).

153-160 (GGAGVGKT) contributes to the ATP binding site.

This sequence belongs to the ATPase alpha/beta chains family. As to quaternary structure, F-type ATPases have 2 components, CF(1) - the catalytic core - and CF(0) - the membrane proton channel. CF(1) has five subunits: alpha(3), beta(3), gamma(1), delta(1), epsilon(1). CF(0) has four main subunits: a(1), b(1), b'(1) and c(9-12).

It is found in the plastid. The protein resides in the chloroplast thylakoid membrane. The enzyme catalyses ATP + H2O + 4 H(+)(in) = ADP + phosphate + 5 H(+)(out). Functionally, produces ATP from ADP in the presence of a proton gradient across the membrane. The catalytic sites are hosted primarily by the beta subunits. This Dicksonia antarctica (Australian tree fern) protein is ATP synthase subunit beta, chloroplastic.